The primary structure comprises 355 residues: UDP-galactose translocator 1 (355 aa).

The segment at 1 to 36 (MKFQNVHISHQDEDKEKLLPNDKDVEKADESPSSSR) is disordered. Positions 9–30 (SHQDEDKEKLLPNDKDVEKADE) are enriched in basic and acidic residues. A run of 6 helical transmembrane segments spans residues 40-60 (VFKCYVIASMTFIWTAYTLTI), 177-197 (WMAITLLMFGVAFVQMNNVSA), 211-231 (IVGLSAVLATCVTAGFAGVYF), 282-302 (VWAVVILLGVGGLYISLVMRY), 309-329 (SMASAVSIILVVVLSMLIFPD), and 330-350 (IFIGMYFVLGTICVVLAVLLY).

Belongs to the nucleotide-sugar transporter family. SLC35A subfamily.

The protein resides in the membrane. Its subcellular location is the cytoplasmic granule membrane. The polypeptide is UDP-galactose translocator 1 (ugtp-1) (Caenorhabditis elegans).